Reading from the N-terminus, the 479-residue chain is Cyclic AMP-responsive element-binding protein 3-like protein 3 (479 aa).

Topologically, residues Met-1 to Gly-317 are cytoplasmic. The tract at residues Cys-67–Gln-144 is disordered. Polar residues predominate over residues Pro-98–Ala-110. Residues Val-239–Leu-302 form the bZIP domain. Positions Lys-241–Arg-270 are basic motif. Positions Leu-281–Leu-302 are leucine-zipper. Residue Lys-290 forms a Glycyl lysine isopeptide (Lys-Gly) (interchain with G-Cter in ubiquitin) linkage. The chain crosses the membrane as a helical; Signal-anchor for type II membrane protein span at residues Thr-318–Phe-338. The Lumenal segment spans residues Asn-339–Leu-479. N-linked (GlcNAc...) asparagine glycosylation is found at Asn-411, Asn-418, and Asn-425.

Belongs to the bZIP family. ATF subfamily. In terms of assembly, binds DNA as a dimer. May form homodimers. Interacts with ATF6. Interacts with SYNV1/HRD1; this interaction leads to CREB3L3 ubiquitination and proteasomal degradation. In terms of processing, following ER stress a fragment containing the cytoplasmic transcription factor domain is released by proteolysis. The cleavage seems to be performed sequentially by site-1 and site-2 proteases. Post-translationally, N-glycosylation is required for optimal proteolytic activation. Ubiquitinated at Lys-290 by SYNV1/HRD1 via 'Lys-27'-linked ubiquitin. As to expression, expressed in adult liver (at protein level) and small intestine.

It is found in the endoplasmic reticulum membrane. Its subcellular location is the nucleus. In terms of biological role, transcription factor that may act during endoplasmic reticulum (ER) stress by activating unfolded protein response target genes. Activated in response to cAMP stimulation. Binds to the cAMP response element (CRE). Activates transcription through box-B element. Activates transcription through CRE. May function synergistically with ATF6. In acute inflammatory response, may activate expression of acute phase response (APR) genes. May be involved in growth suppression. Regulates FGF21 transcription. Plays a crucial role in the regulation of triglyceride metabolism and is required for the maintenance of normal plasma triglyceride concentrations. The polypeptide is Cyclic AMP-responsive element-binding protein 3-like protein 3 (Creb3l3) (Mus musculus (Mouse)).